Here is a 50-residue protein sequence, read N- to C-terminus: Large ribosomal subunit protein bL33 (50 aa).

Belongs to the bacterial ribosomal protein bL33 family.

The chain is Large ribosomal subunit protein bL33 from Fusobacterium nucleatum subsp. nucleatum (strain ATCC 25586 / DSM 15643 / BCRC 10681 / CIP 101130 / JCM 8532 / KCTC 2640 / LMG 13131 / VPI 4355).